Reading from the N-terminus, the 88-residue chain is MAHKKGTGSTRNGRDSNAQRLGVKKFGGEVVRSGSIIVRQRGTKFHPGVNVGRGGDDTLFALIDGVVTFERKGKGGKKVSVYPAGEAA.

The tract at residues 1 to 23 is disordered; it reads MAHKKGTGSTRNGRDSNAQRLGV. Polar residues predominate over residues 7 to 19; it reads TGSTRNGRDSNAQ.

Belongs to the bacterial ribosomal protein bL27 family.

In Synechococcus elongatus (strain ATCC 33912 / PCC 7942 / FACHB-805) (Anacystis nidulans R2), this protein is Large ribosomal subunit protein bL27 (rpmA).